A 208-amino-acid chain; its full sequence is Floral homeotic protein PISTILLATA (208 aa).

Residues 3–57 enclose the MADS-box domain; the sequence is RGKIEIKRIENANNRVVTFSKRRNGLVKKAKEITVLCDAKVALIIFASNGKMIDY. Residues 75-117 adopt a coiled-coil conformation; that stretch reads SGKKLWDAKHENLSNEIDRIKKENDSLQLELRHLKGEDIQSLN. The 87-residue stretch at 84 to 170 folds into the K-box domain; sequence HENLSNEIDR…TFQLQQQEMA (87 aa).

In terms of assembly, forms a heterodimer with APETALA3, capable of binding to CArG-box sequences. AP3/PI heterodimer binds AP1 or SEP3 to form a ternary complex.

Its subcellular location is the nucleus. Functionally, probable transcription factor involved in the genetic control of flower development. Is required for normal development of petals and stamens in the wild-type flower. Forms a heterodimer with APETALA3 that is required for autoregulation of both AP3 and PI genes. AP3/PI heterodimer interacts with APETALA1 or SEPALLATA3 to form a ternary complex that could be responsible for the regulation of the genes involved in the flower development. AP3/PI heterodimer activates the expression of NAP. AP3/PI prevents GATA22/GNL and GATA21/GNC expression. The chain is Floral homeotic protein PISTILLATA (PI) from Arabidopsis thaliana (Mouse-ear cress).